The primary structure comprises 157 residues: Transcriptional repressor NrdR (157 aa).

A zinc finger spans residues 3–34 (CPFCRHPDSRVVDSRTSDDGLSIRRRRQCPEC). The ATP-cone domain maps to 46–136 (LSVIKRNGVV…VYQGFDSLDD (91 aa)).

This sequence belongs to the NrdR family. Zn(2+) is required as a cofactor.

Its function is as follows. Negatively regulates transcription of bacterial ribonucleotide reductase nrd genes and operons by binding to NrdR-boxes. This chain is Transcriptional repressor NrdR, found in Clavibacter michiganensis subsp. michiganensis (strain NCPPB 382).